A 32-amino-acid chain; its full sequence is Cytochrome b6-f complex subunit 8 (32 aa).

A helical transmembrane segment spans residues 6–26 (IVGITWAALMVVFTFSLSLVV).

It belongs to the PetN family. As to quaternary structure, the 4 large subunits of the cytochrome b6-f complex are cytochrome b6, subunit IV (17 kDa polypeptide, PetD), cytochrome f and the Rieske protein, while the 4 small subunits are PetG, PetL, PetM and PetN. The complex functions as a dimer.

The protein resides in the plastid. The protein localises to the chloroplast thylakoid membrane. Its function is as follows. Component of the cytochrome b6-f complex, which mediates electron transfer between photosystem II (PSII) and photosystem I (PSI), cyclic electron flow around PSI, and state transitions. This chain is Cytochrome b6-f complex subunit 8, found in Pinus koraiensis (Korean pine).